We begin with the raw amino-acid sequence, 287 residues long: Fructose-1,6-bisphosphatase class 1 (287 aa).

4 residues coordinate Mg(2+): glutamate 67, aspartate 86, leucine 88, and aspartate 89. Residues 89–92 (DGSS), tyrosine 195, and lysine 226 contribute to the substrate site. Glutamate 232 contacts Mg(2+).

The protein belongs to the FBPase class 1 family. In terms of assembly, homotetramer. Requires Mg(2+) as cofactor.

The protein localises to the cytoplasm. The enzyme catalyses beta-D-fructose 1,6-bisphosphate + H2O = beta-D-fructose 6-phosphate + phosphate. Its pathway is carbohydrate biosynthesis; gluconeogenesis. This is Fructose-1,6-bisphosphatase class 1 from Campylobacter concisus (strain 13826).